The chain runs to 117 residues: UPF0321 protein PJ695.01c (117 aa).

The first 17 residues, 1-17 (MLLLLYICCLFLKFILA), serve as a signal peptide directing secretion. Residues asparagine 39, asparagine 65, asparagine 71, and asparagine 104 are each glycosylated (N-linked (GlcNAc...) asparagine).

Belongs to the UPF0321 family.

This chain is UPF0321 protein PJ695.01c, found in Schizosaccharomyces pombe (strain 972 / ATCC 24843) (Fission yeast).